A 380-amino-acid polypeptide reads, in one-letter code: Cytochrome b (380 aa).

Helical transmembrane passes span 34–54 (FGSL…LLAM), 78–99 (WLIR…YMHI), 114–134 (WNTG…GYVL), and 179–199 (FFAL…IHLT). Heme b-binding residues include H84 and H98. Residues H183 and H197 each coordinate heme b. A ubiquinone is bound at residue H202. A run of 4 helical transmembrane segments spans residues 227-247 (LKDI…ALFS), 289-309 (LGGV…PLLH), 321-341 (LSQL…WIGS), and 348-368 (FIII…ILFP).

Belongs to the cytochrome b family. The cytochrome bc1 complex contains 11 subunits: 3 respiratory subunits (MT-CYB, CYC1 and UQCRFS1), 2 core proteins (UQCRC1 and UQCRC2) and 6 low-molecular weight proteins (UQCRH/QCR6, UQCRB/QCR7, UQCRQ/QCR8, UQCR10/QCR9, UQCR11/QCR10 and a cleavage product of UQCRFS1). This cytochrome bc1 complex then forms a dimer. Requires heme b as cofactor.

The protein localises to the mitochondrion inner membrane. In terms of biological role, component of the ubiquinol-cytochrome c reductase complex (complex III or cytochrome b-c1 complex) that is part of the mitochondrial respiratory chain. The b-c1 complex mediates electron transfer from ubiquinol to cytochrome c. Contributes to the generation of a proton gradient across the mitochondrial membrane that is then used for ATP synthesis. This chain is Cytochrome b (MT-CYB), found in Oceanodroma furcata (Fork-tailed storm-petrel).